The following is a 274-amino-acid chain: Triosephosphate isomerase (274 aa).

31–33 (NWK) is a binding site for substrate. The Electrophile role is filled by His118. The active-site Proton acceptor is the Glu188. Substrate is bound by residues Gly194, Ser234, and 255 to 256 (GG).

It belongs to the triosephosphate isomerase family. Homodimer.

The protein localises to the cytoplasm. The enzyme catalyses D-glyceraldehyde 3-phosphate = dihydroxyacetone phosphate. The protein operates within carbohydrate biosynthesis; gluconeogenesis. It participates in carbohydrate degradation; glycolysis; D-glyceraldehyde 3-phosphate from glycerone phosphate: step 1/1. Involved in the gluconeogenesis. Catalyzes stereospecifically the conversion of dihydroxyacetone phosphate (DHAP) to D-glyceraldehyde-3-phosphate (G3P). The polypeptide is Triosephosphate isomerase (Chlamydia trachomatis serovar D (strain ATCC VR-885 / DSM 19411 / UW-3/Cx)).